The chain runs to 298 residues: Triosephosphate isomerase, chloroplastic (298 aa).

The span at 1-18 (MAARRPSPPPASPPPPRP) shows a compositional bias: pro residues. The tract at residues 1–32 (MAARRPSPPPASPPPPRPRSTTTTRTTSSASA) is disordered. A chloroplast-targeting transit peptide spans 1 to 43 (MAARRPSPPPASPPPPRPRSTTTTRTTSSASAAPAAAQRLVAM). Low complexity predominate over residues 19 to 32 (RSTTTTRTTSSASA). Substrate contacts are provided by Asn54 and Lys56. His138 acts as the Electrophile in catalysis. Cys186 carries the cysteine derivative modification. The active-site Proton acceptor is Glu208.

The protein belongs to the triosephosphate isomerase family. In terms of assembly, homodimer.

It localises to the plastid. It is found in the chloroplast. The catalysed reaction is D-glyceraldehyde 3-phosphate = dihydroxyacetone phosphate. Its pathway is carbohydrate biosynthesis; Calvin cycle. The sequence is that of Triosephosphate isomerase, chloroplastic from Secale cereale (Rye).